The following is a 163-amino-acid chain: Phosphopantetheine adenylyltransferase (163 aa).

S9 lines the substrate pocket. Residues 9–10 and H17 each bind ATP; that span reads SF. 3 residues coordinate substrate: K41, T73, and R87. Residues 88-90, E98, and 123-129 contribute to the ATP site; these read GLR and YAYFSSS.

The protein belongs to the bacterial CoaD family. Homohexamer. Mg(2+) serves as cofactor.

It is found in the cytoplasm. It carries out the reaction (R)-4'-phosphopantetheine + ATP + H(+) = 3'-dephospho-CoA + diphosphate. The protein operates within cofactor biosynthesis; coenzyme A biosynthesis; CoA from (R)-pantothenate: step 4/5. Reversibly transfers an adenylyl group from ATP to 4'-phosphopantetheine, yielding dephospho-CoA (dPCoA) and pyrophosphate. This Lactiplantibacillus plantarum (strain ATCC BAA-793 / NCIMB 8826 / WCFS1) (Lactobacillus plantarum) protein is Phosphopantetheine adenylyltransferase.